A 420-amino-acid chain; its full sequence is Ketoreductase sphF (420 aa).

The disordered stretch occupies residues 1-21 (MLERPSFPRLGAGTRHHRPLG). A helical transmembrane segment spans residues 29 to 49 (WLLAFTGISGIAGMMIPYVPW). The segment at 275-298 (RQKRSPSPGRHPALGSPPAQLRQD) is disordered.

Its subcellular location is the membrane. It carries out the reaction 3-oxopresphingofungin + NADPH + 2 H(+) = presphingofungin + NADP(+). The protein operates within secondary metabolite biosynthesis. In terms of biological role, ketoreductase; part of the gene cluster that mediates the biosynthesis of sphingofungins, bioactive molecules acting as sphingolipid inhibitors via inhibiting serine palmitoyl transferase (SPT). Within the pathway, sphF catalyzes the reduction of the C-3 ketone of 3-keto-presphingofungin to produce presphingofungin. Sphingofungin biosynthesis starts with the PKS sphB that produces an C18 polyketide precursor 3-hydroxyoctadeca-4,10-dienoyl-ACP containing one delta-6 desaturation and one delta-12 desaturation. The aminoacyl transferase sphA uses the sphB product to produce 3-keto-presphingofungin by adding an aminomalonate molecule. SphF then reduces the C-3 ketone of 3-keto-presphingofungin which leads to presphingofungin. The cytochrome P450 monooxygenase sphH converts presphingofungin into sphingofungin B1 which is further converted to sphingofungin B by the dioxygenase sphC. SphC is also able to convert presphingofungin into sphingofungin B2. The acetyltransferase sphE acetylates sphingofungin B to produce sphingofungin C, but can also convert sphingofungin B1 into sphingofungin C1 and sphingofungin B2 into sphingofungin C2. Finally, sphingofungin C can be spontaneously converted into sphingofungin D. The sequence is that of Ketoreductase sphF from Aspergillus fumigatus (strain CBS 144.89 / FGSC A1163 / CEA10) (Neosartorya fumigata).